A 247-amino-acid chain; its full sequence is GTP cyclohydrolase 1 type 2 homolog (247 aa).

A divalent metal cation-binding residues include His63, His64, Asp101, His215, and Glu219.

Belongs to the GTP cyclohydrolase I type 2/NIF3 family. As to quaternary structure, homohexamer.

In Buchnera aphidicola subsp. Baizongia pistaciae (strain Bp), this protein is GTP cyclohydrolase 1 type 2 homolog.